A 185-amino-acid polypeptide reads, in one-letter code: Iodate reductase subunit IdrB (185 aa).

The segment at residues 1–46 (MTTHPIHLHHDDPAHGGERACMSRRSFLLAGGAMVTLASLPGTAVA) is a signal peptide (tat-type signal). The Rieske domain occupies 69–168 (GEPLEFAYPY…LEVRGDDIYA (100 aa)). Residues Cys109, His111, Cys130, and His133 each contribute to the [2Fe-2S] cluster site.

Belongs to the AOX family. As to quaternary structure, the iodate reductase (Idr) complex is composed of a molybdopterin-dependent iodate reductase (IdrA and IdrB subunits) and two associated peroxidases (IdrP1 and IdrP2). The cofactor is [2Fe-2S] cluster. Predicted to be exported by the Tat system. The position of the signal peptide cleavage has not been experimentally proven.

It is found in the periplasm. Functionally, involved in iodate respiration. May accept electrons from cytochrome c551, and catalyze the reduction of iodate (IO(3)(-)) to produce the chemically unstable intermediate hypoiodous acid (HIO). This intermediate then undergoes abiotic disproportionation to yield two molecules of iodide (I(-)) and one molecule of iodate. The resultant iodate subsequently cycles back into the reductive pathway. The initial reduction of iodate may inadvertently produce low levels of incidental toxic H(2)O(2), which is detoxified by IdrP1 and IdrP2. The protein is Iodate reductase subunit IdrB of Denitromonas iodatirespirans.